A 1467-amino-acid polypeptide reads, in one-letter code: MDVLEMLRASASGSYNTIFSDAWCQYVSKQITATMYMYCAFGLMGVLFLAWFMYFKRLARLRLRDELARSISSVTNSYGDLRGLRFRKRDKMLFYGRRMLRKMKNVSGQMYSSGKGYKRRAVMRFARRILQLRRDNMPLEMRTVEPPAEYLEETIEGSDRVPPDALYMLQSIRIFGHFEKPIFLRLCKHTQLLELMAGDYLFKITDPDDSVYIVQSGMINVYISNADGSTLSLKTVRKGESVTSLLSFIDVLSGNPSYYKTVTAKAIEKSVVIRLPMQAFEEVFQDNPDVMIRVIQVIMIRLQRVLFTALRNYLGLNAELVQNHMRYKSVSTMSGPINSQTSQSSRQATANGPPMVINQLNLMQSAASGLGMGMGTGTGSGVSVTVTRPPPSPSRHSREEHTLSDPNPNPDGSVHGTSNLFTEVHGDAPNADLFHQQQQSVGNLSTRRSSITQMTPDGSHTCPQAPGVTTSIDMRLVQSSAVDSLRKELGLSEEDAHIIEPFVELRELEPNVTLITEGNADDVCVWFVMTGTLAVYQSNQDATRAKQDKNDMLIHFVHPGEIVGGLAMLTGEASAYTIRSRSNSRIAFIRRAAIYQIMRQRPRIVLDLGNGVVRRLSPLVRQCDYALDWIFLESGRAVYRQDESSDSTYIVLSGRMRSVITHPGGKKEIVGEYGKGDLVGIVEMITETSRTTTVMAVRDSELAKLPEGLFNAIKLRYPIVVTKLISFLSHRFLGSMQTRSGSGAPGAPVEANPVTHKYSTVALVPITDEVPLTPFTYELYHSLCAIGPVLRLTSDVVRKQLGPNIFEAANEYRLTSWLAQQEDRNIITLYQCDSSLSAWTQRCMRQADVILIVGLGDRSHLVGKFEREIDRLAMRTQKELVLLYPEATNAKPANTLSWLNARPWVTKHHHVLCVKRIFTRKSQYRINDLYSRVLLSEPNMHSDFSRLARWLTGNSIGLVLGGGGARGAAHIGMLKAIQEAGIPVDMVGGVSIGALMGALWCSERNITTVTQKAREWSKKMTKWFLQLLDLTYPITSMFSGREFNKTIHDTFGDVSIEDLWIPYFTLTTDITASCHRIHTNGSLWRYVRSSMSLSGYMPPLCDPKDGHLLLDGGYVNNLPGHLWRYCRASMSIAGVFPPFCDYRDGHLLLDGCYTNNVPADVMHNLGAAHIIAIDVGSQDDTDLTNYGDDLSGWWLLYKKWNPFTSPVKVPDLPDIQSRLAYVSCVRQLEEVKNSDYCEYIRPPIDKYKTLAFGSFDEIRDVGYVFGKNYFENMAKAGRLGRFNQWFNKEPPKRVNHASLNEYTFIDLAQIVCRLPETYAVNTAELFSEDEDCDGYISEPTTLNTDRRRIQVPRAGNSLSFSETEMDSDVELDLKLERKMDKSTQSTPPTSSRASVRGKEEARHMDNWHWSVKHKVETASGATEATNAMIDQEQQHQQQADQGVGAEQLADKDEDKENRSSTYNETKN.

At 1–34 (MDVLEMLRASASGSYNTIFSDAWCQYVSKQITAT) the chain is on the lumenal side. The chain crosses the membrane as a helical span at residues 35–55 (MYMYCAFGLMGVLFLAWFMYF). The Cytoplasmic segment spans residues 56–1467 (KRLARLRLRD…RSSTYNETKN (1412 aa)). Residue 174 to 301 (IFGHFEKPIF…IRVIQVIMIR (128 aa)) coordinates a nucleoside 3',5'-cyclic phosphate. 2 disordered regions span residues 332 to 353 (TMSG…ANGP) and 372 to 416 (MGMG…SVHG). Residues 339–350 (SQTSQSSRQATA) show a composition bias toward low complexity. Phosphoserine is present on residues serine 450 and serine 459. Residues 488 to 615 (ELGL…VVRR) and 604 to 731 (IVLD…LSHR) each bind a nucleoside 3',5'-cyclic phosphate. The PNPLA domain occupies 958 to 1124 (LVLGGGGARG…VNNLPGHLWR (167 aa)). The GXGXXG motif lies at 962–967 (GGGARG). Residues 989-993 (GVSIG) carry the GXSXG motif. Serine 991 acts as the Nucleophile in catalysis. Aspartate 1111 (proton acceptor) is an active-site residue. A DGA/G motif is present at residues 1111-1113 (DGG). Position 1205 is a phosphoserine (serine 1205). The interval 1377 to 1467 (RKMDKSTQST…RSSTYNETKN (91 aa)) is disordered. The span at 1382-1393 (STQSTPPTSSRA) shows a compositional bias: polar residues. Composition is skewed to basic and acidic residues over residues 1396-1406 (RGKEEARHMDN) and 1448-1458 (LADKDEDKENR).

The protein belongs to the NTE family. In terms of assembly, interacts with Pka-C3; interaction inhibits the catalytic function of Pka-C3 and the esterase activity of sws.

It localises to the endoplasmic reticulum membrane. The catalysed reaction is a 1-acyl-sn-glycero-3-phosphocholine + H2O = sn-glycerol 3-phosphocholine + a fatty acid + H(+). In terms of biological role, phospholipase B that deacylates intracellular phosphatidylcholine (PtdCho), generating glycerophosphocholine (GroPtdCho). This deacylation occurs at both sn-2 and sn-1 positions of PtdCho. Its specific chemical modification by certain organophosphorus (OP) compounds leads to distal axonopathy. Plays a role in the signaling mechanism between neurons and glia that regulates glia wrapping during development of the adult brain. Essential for membrane lipid homeostasis and cell survival in both neurons and glia of the adult brain. The protein is Neuropathy target esterase sws of Drosophila yakuba (Fruit fly).